Consider the following 296-residue polypeptide: Tyrosine recombinase XerC (296 aa).

Residues 1–84 form the Core-binding (CB) domain; that stretch reads MEKIQQAYLY…TLRSFYEYWM (84 aa). The Tyr recombinase domain occupies 105–286; that stretch reads YLPHFFYEEE…TNEQLRKVYL (182 aa). Active-site residues include R145, K169, H238, R241, and H264. Catalysis depends on Y273, which acts as the O-(3'-phospho-DNA)-tyrosine intermediate.

Belongs to the 'phage' integrase family. XerC subfamily. In terms of assembly, forms a cyclic heterotetrameric complex composed of two molecules of XerC and two molecules of XerD.

The protein localises to the cytoplasm. In terms of biological role, site-specific tyrosine recombinase, which acts by catalyzing the cutting and rejoining of the recombining DNA molecules. The XerC-XerD complex is essential to convert dimers of the bacterial chromosome into monomers to permit their segregation at cell division. It also contributes to the segregational stability of plasmids. In Staphylococcus saprophyticus subsp. saprophyticus (strain ATCC 15305 / DSM 20229 / NCIMB 8711 / NCTC 7292 / S-41), this protein is Tyrosine recombinase XerC.